The chain runs to 208 residues: Uracil phosphoribosyltransferase (208 aa).

5-phospho-alpha-D-ribose 1-diphosphate-binding positions include Arg-78, Arg-103, and 130–138; that span reads DPMLATGGS. Uracil is bound by residues Ile-193 and 198–200; that span reads GDA. Position 199 (Asp-199) interacts with 5-phospho-alpha-D-ribose 1-diphosphate.

This sequence belongs to the UPRTase family. The cofactor is Mg(2+).

It carries out the reaction UMP + diphosphate = 5-phospho-alpha-D-ribose 1-diphosphate + uracil. The protein operates within pyrimidine metabolism; UMP biosynthesis via salvage pathway; UMP from uracil: step 1/1. Allosterically activated by GTP. In terms of biological role, catalyzes the conversion of uracil and 5-phospho-alpha-D-ribose 1-diphosphate (PRPP) to UMP and diphosphate. The protein is Uracil phosphoribosyltransferase of Pectobacterium carotovorum subsp. carotovorum (strain PC1).